The primary structure comprises 256 residues: 4-oxalocrotonate decarboxylase (256 aa).

The protein belongs to the hydratase/decarboxylase family. In terms of assembly, forms a complex with AmnF. Requires Mg(2+) as cofactor. Mn(2+) is required as a cofactor.

It catalyses the reaction (3E)-2-oxohex-3-enedioate + H(+) = 2-oxopent-4-enoate + CO2. With respect to regulation, strongly inhibited by Fe(2+), Fe(3+), K(3)[Fe(CN)(6)], Ag(+) and Cu(2+). Functionally, involved in the modified meta-cleavage pathway for the 2-aminophenol catabolism. The protein is 4-oxalocrotonate decarboxylase (amnE) of Pseudomonas sp.